Here is an 874-residue protein sequence, read N- to C-terminus: Alanine--tRNA ligase (874 aa).

The Zn(2+) site is built by H564, H568, C665, and H669.

Belongs to the class-II aminoacyl-tRNA synthetase family. Requires Zn(2+) as cofactor.

The protein localises to the cytoplasm. The catalysed reaction is tRNA(Ala) + L-alanine + ATP = L-alanyl-tRNA(Ala) + AMP + diphosphate. Catalyzes the attachment of alanine to tRNA(Ala) in a two-step reaction: alanine is first activated by ATP to form Ala-AMP and then transferred to the acceptor end of tRNA(Ala). Also edits incorrectly charged Ser-tRNA(Ala) and Gly-tRNA(Ala) via its editing domain. This is Alanine--tRNA ligase from Paraburkholderia phymatum (strain DSM 17167 / CIP 108236 / LMG 21445 / STM815) (Burkholderia phymatum).